A 159-amino-acid chain; its full sequence is uncharacterized protein (159 aa).

Basic and acidic residues predominate over residues 1–13 (MESRPSGRQHASE). The disordered stretch occupies residues 1-35 (MESRPSGRQHASEGDGDQSPTQCAGMRSSGRSDQP).

This is an uncharacterized protein from Homo sapiens (Human).